Here is a 101-residue protein sequence, read N- to C-terminus: TrfB transcriptional repressor protein (101 aa).

Positions 37–56 form a DNA-binding region, H-T-H motif; it reads QATFATSLGLTRGAVSQAVH.

Functionally, in conjunction with KorB, inhibits the transcription of kilA, trfA and korAB operons. In conjunction with KorC is responsible for the negative control of kilC and kilE operons. The sequence is that of TrfB transcriptional repressor protein (trfB) from Escherichia coli.